The chain runs to 414 residues: 5-aminolevulinate synthase (414 aa).

Substrate-binding residues include R22, S133, and K152. Pyridoxal 5'-phosphate-binding residues include S185, H213, and T241. Residue K244 is part of the active site. N6-(pyridoxal phosphate)lysine is present on K244. Pyridoxal 5'-phosphate-binding residues include T273 and T274. A substrate-binding site is contributed by T359.

It belongs to the class-II pyridoxal-phosphate-dependent aminotransferase family. As to quaternary structure, homodimer. The cofactor is pyridoxal 5'-phosphate.

The catalysed reaction is succinyl-CoA + glycine + H(+) = 5-aminolevulinate + CO2 + CoA. Its pathway is porphyrin-containing compound metabolism; protoporphyrin-IX biosynthesis; 5-aminolevulinate from glycine: step 1/1. The chain is 5-aminolevulinate synthase (hemA) from Rickettsia conorii (strain ATCC VR-613 / Malish 7).